The chain runs to 360 residues: Ferredoxin--NADP reductase, leaf isozyme, chloroplastic (360 aa).

A chloroplast-targeting transit peptide spans 1–52; that stretch reads MAAAVTAAVSLPYSNSTSLPIRTSIVAPERLVFKKVSLNNVSISGRVGTIRA. The FAD-binding FR-type domain occupies 81–203; that stretch reads KEPYVGRCLL…TGPVGKEMLM (123 aa). FAD contacts are provided by residues 139 to 142, 160 to 162, tyrosine 166, 177 to 179, and threonine 218; these read RLYS, CVK, and VCS. NADP(+)-binding residues include serine 142 and lysine 162. NADP(+) contacts are provided by residues threonine 218, 250–251, 280–281, lysine 290, 319–320, and glutamate 358; these read VP, SR, and GL.

The protein belongs to the ferredoxin--NADP reductase type 1 family. Monomer. Interacts with TIC62 (via C-terminus). It depends on FAD as a cofactor.

Its subcellular location is the plastid. It is found in the chloroplast stroma. The protein localises to the chloroplast thylakoid membrane. The enzyme catalyses 2 reduced [2Fe-2S]-[ferredoxin] + NADP(+) + H(+) = 2 oxidized [2Fe-2S]-[ferredoxin] + NADPH. It functions in the pathway energy metabolism; photosynthesis. May play a key role in regulating the relative amounts of cyclic and non-cyclic electron flow to meet the demands of the plant for ATP and reducing power. The polypeptide is Ferredoxin--NADP reductase, leaf isozyme, chloroplastic (PETH) (Pisum sativum (Garden pea)).